A 257-amino-acid chain; its full sequence is Type III pantothenate kinase (257 aa).

6–13 (DAGNTNIV) is a binding site for ATP. Substrate contacts are provided by residues tyrosine 100 and 107–110 (GADR). Aspartate 109 acts as the Proton acceptor in catalysis. Residue aspartate 129 coordinates K(+). Threonine 132 lines the ATP pocket. Threonine 184 contacts substrate.

Belongs to the type III pantothenate kinase family. In terms of assembly, homodimer. Requires NH4(+) as cofactor. K(+) serves as cofactor.

Its subcellular location is the cytoplasm. The catalysed reaction is (R)-pantothenate + ATP = (R)-4'-phosphopantothenate + ADP + H(+). The protein operates within cofactor biosynthesis; coenzyme A biosynthesis; CoA from (R)-pantothenate: step 1/5. Functionally, catalyzes the phosphorylation of pantothenate (Pan), the first step in CoA biosynthesis. In Clostridium botulinum (strain Alaska E43 / Type E3), this protein is Type III pantothenate kinase.